The primary structure comprises 358 residues: DNA polymerase IV (358 aa).

In terms of domain architecture, UmuC spans 4–185 (IIHIDMDCYF…LPLIKIPGVG (182 aa)). Mg(2+) is bound by residues Asp-8 and Asp-103. Glu-104 is a catalytic residue.

Belongs to the DNA polymerase type-Y family. Monomer. Requires Mg(2+) as cofactor.

The protein resides in the cytoplasm. It carries out the reaction DNA(n) + a 2'-deoxyribonucleoside 5'-triphosphate = DNA(n+1) + diphosphate. In terms of biological role, poorly processive, error-prone DNA polymerase involved in untargeted mutagenesis. Copies undamaged DNA at stalled replication forks, which arise in vivo from mismatched or misaligned primer ends. These misaligned primers can be extended by PolIV. Exhibits no 3'-5' exonuclease (proofreading) activity. May be involved in translesional synthesis, in conjunction with the beta clamp from PolIII. This is DNA polymerase IV from Shewanella denitrificans (strain OS217 / ATCC BAA-1090 / DSM 15013).